A 71-amino-acid chain; its full sequence is Small ribosomal subunit protein bS18 (71 aa).

Belongs to the bacterial ribosomal protein bS18 family. In terms of assembly, part of the 30S ribosomal subunit. Forms a tight heterodimer with protein bS6.

Functionally, binds as a heterodimer with protein bS6 to the central domain of the 16S rRNA, where it helps stabilize the platform of the 30S subunit. The protein is Small ribosomal subunit protein bS18 of Thermosynechococcus vestitus (strain NIES-2133 / IAM M-273 / BP-1).